Reading from the N-terminus, the 637-residue chain is Early transcription factor 70 kDa subunit (637 aa).

A Helicase ATP-binding domain is found at Arg32 to Glu185. His45–Thr52 contributes to the ATP binding site. The DEXH box motif lies at Asp135 to His138. Residues Lys327–Leu507 form the Helicase C-terminal domain.

This sequence belongs to the helicase family. VETF subfamily. As to quaternary structure, heterodimer of a 70 kDa and a 82 kDa subunit. Part of the early transcription complex composed of ETF, RAP94/OPG109, and the DNA-directed RNA polymerase.

Its subcellular location is the virion. Acts with RNA polymerase to initiate transcription from early gene promoters. Is recruited by the RPO-associated protein of 94 kDa RAP94/OPG109 to form the early transcription complex, which also contains the core RNA polymerase. ETF heterodimer binds to early gene promoters. The protein is Early transcription factor 70 kDa subunit (OPG118) of Homo sapiens (Human).